Consider the following 331-residue polypeptide: Ketol-acid reductoisomerase (NADP(+)) (331 aa).

The 181-residue stretch at alanine 2–threonine 182 folds into the KARI N-terminal Rossmann domain. NADP(+) contacts are provided by residues tyrosine 25 to glutamine 28, serine 51, serine 53, and aspartate 83 to glutamine 86. The active site involves histidine 108. Glycine 134 is a binding site for NADP(+). A KARI C-terminal knotted domain is found at threonine 183–leucine 328. Mg(2+)-binding residues include aspartate 191, glutamate 195, glutamate 227, and glutamate 231. Serine 252 contacts substrate.

Belongs to the ketol-acid reductoisomerase family. It depends on Mg(2+) as a cofactor.

The enzyme catalyses (2R)-2,3-dihydroxy-3-methylbutanoate + NADP(+) = (2S)-2-acetolactate + NADPH + H(+). The catalysed reaction is (2R,3R)-2,3-dihydroxy-3-methylpentanoate + NADP(+) = (S)-2-ethyl-2-hydroxy-3-oxobutanoate + NADPH + H(+). The protein operates within amino-acid biosynthesis; L-isoleucine biosynthesis; L-isoleucine from 2-oxobutanoate: step 2/4. It participates in amino-acid biosynthesis; L-valine biosynthesis; L-valine from pyruvate: step 2/4. Functionally, involved in the biosynthesis of branched-chain amino acids (BCAA). Catalyzes an alkyl-migration followed by a ketol-acid reduction of (S)-2-acetolactate (S2AL) to yield (R)-2,3-dihydroxy-isovalerate. In the isomerase reaction, S2AL is rearranged via a Mg-dependent methyl migration to produce 3-hydroxy-3-methyl-2-ketobutyrate (HMKB). In the reductase reaction, this 2-ketoacid undergoes a metal-dependent reduction by NADPH to yield (R)-2,3-dihydroxy-isovalerate. The protein is Ketol-acid reductoisomerase (NADP(+)) of Rippkaea orientalis (strain PCC 8801 / RF-1) (Cyanothece sp. (strain PCC 8801)).